We begin with the raw amino-acid sequence, 337 residues long: Mitochondrial uncoupling protein 6 (337 aa).

Solcar repeat units follow at residues 4 to 136 (KPFL…LKRR), 145 to 236 (FPLV…VKEI), and 246 to 331 (GGIG…VRGL). 6 consecutive transmembrane segments (helical) span residues 6 to 26 (FLEGGIAAIIAGALTHPLDLI), 105 to 125 (PAALFSGVSATILRQMLYSAT), 151 to 171 (ITAGLIAGAVGSVVGNPADVA), 210 to 230 (RGSWLTVNRAMIVTASQLATY), 252 to 272 (VAASFAAGIVAAVASNPIDVV), and 304 to 324 (YKGLVPTATRQGPFTMILFLT).

It belongs to the mitochondrial carrier (TC 2.A.29) family.

Its subcellular location is the mitochondrion inner membrane. In terms of biological role, PUMPS are mitochondrial transporter proteins that create proton leaks across the inner mitochondrial membrane, thus uncoupling oxidative phosphorylation. This leads to a decrease in the efficiency of oxidative phosphorylation and an increase in heat production. May be involved in protecting plant cells against oxidative stress damage. Recombinant PUMP6, reconstituted into liposomes, transports a wide range of dicarboxylic acids including malate, oxaloacetate and succinate as well as phosphate, sulfate and thiosulfate. However, it is unknown if these transports are of any biological significance in vivo. The polypeptide is Mitochondrial uncoupling protein 6 (PUMP6) (Arabidopsis thaliana (Mouse-ear cress)).